The sequence spans 299 residues: Taste receptor type 2 member 1 (299 aa).

The Extracellular segment spans residues 1–9 (MLESHLIIY). Residues 10–30 (FLLAVIQFLLGIFTNGIIVVV) form a helical membrane-spanning segment. Residues 31–55 (NGIDLIKHRKMAPLDLLLSCLAVSR) are Cytoplasmic-facing. Residues 56 to 76 (IFLQLFIFYVNVIVIFFIEFI) form a helical membrane-spanning segment. Over 77–81 (MCSAN) the chain is Extracellular. The helical transmembrane segment at 82–102 (CAILLFINELELWLATWLGVF) threads the bilayer. Topologically, residues 103–124 (YCAKVASVRHPLFXWLKMRISK) are cytoplasmic. A helical membrane pass occupies residues 125-145 (LVPWMILGSLLYVSMICVFHS). Topologically, residues 146–178 (KYAGFMVPYFLRNFFSQNTTIQKEDTLAIQIFS) are extracellular. Asn-163 carries an N-linked (GlcNAc...) asparagine glycan. A helical membrane pass occupies residues 179-199 (FVAEFSVPLLIFLVAVLLLIF). The Cytoplasmic portion of the chain corresponds to 200-222 (SLGRHTRQMRNTVAGSRVPGRGA). Residues 223 to 243 (PISALLSILSFLILYFSHCMI) form a helical membrane-spanning segment. The Extracellular portion of the chain corresponds to 244 to 257 (KVFLSSLKFHIRRF). Residues 258 to 278 (IFLFFILVIGIYPSGHSLILI) form a helical membrane-spanning segment. The Cytoplasmic portion of the chain corresponds to 279 to 299 (LGNPKLKQNAKKFLLHSKCCQ).

The protein belongs to the G-protein coupled receptor T2R family.

The protein resides in the membrane. Functionally, receptor that may play a role in the perception of bitterness and is gustducin-linked. May play a role in sensing the chemical composition of the gastrointestinal content. The activity of this receptor may stimulate alpha gustducin, mediate PLC-beta-2 activation and lead to the gating of TRPM5. In Gorilla gorilla gorilla (Western lowland gorilla), this protein is Taste receptor type 2 member 1 (TAS2R1).